The following is a 412-amino-acid chain: NFATC2-interacting protein (412 aa).

Residues 1–38 are disordered; the sequence is MAEPLRGRGPRSRGGRGARRARGARGRCPRARQSPARL. Residues 8-30 are compositionally biased toward basic residues; that stretch reads RGPRSRGGRGARRARGARGRCPR. Residues Ser-49, Ser-51, Ser-79, Ser-81, and Ser-83 each carry the phosphoserine modification. Positions 58–115 are disordered; it reads VADPVEVPVARLPAPAKPEQDSDSDSEGAAEGPAGAPRTLVRRRRRRLLDPGEAPVVP. Residues 86-96 show a composition bias toward low complexity; it reads AAEGPAGAPRT. Residue Ser-118 is modified to Phosphoserine. Lys-120 is covalently cross-linked (Glycyl lysine isopeptide (Lys-Gly) (interchain with G-Cter in SUMO2)). Residues 136 to 206 are disordered; that stretch reads KLCPSEPEDE…SSRNKSRKHT (71 aa). Residues 168-227 adopt a coiled-coil conformation; sequence RKKLRKKCEKEEKKMEEFPDQDISPLPQPSSRNKSRKHTEALQKLREVNKRLQDLRSCLS. The span at 175–184 shows a compositional bias: basic and acidic residues; that stretch reads CEKEEKKMEE. Residues Ser-191, Ser-197, and Ser-307 each carry the phosphoserine modification. Phosphothreonine is present on residues Thr-309 and Thr-311. In terms of domain architecture, Ubiquitin-like spans 341-412; that stretch reads LRLRVQGKEK…ESGDLIEVWG (72 aa). Phosphoserine occurs at positions 362 and 383.

In terms of assembly, interacts with NFATC2, TRAF1, TRAF2 and PRMT1. Interacts with UBE2I/UBC9. In terms of processing, methylation at the N-terminus by PRMT1 modulates interaction with the NFAT complex and results in augmented cytokine production. As to expression, highest level detected in spleen, thymus and testis.

It localises to the nucleus. The protein resides in the cytoplasm. Its function is as follows. In T-helper 2 (Th2) cells, regulates the magnitude of NFAT-driven transcription of a specific subset of cytokine genes, including IL3, IL4, IL5 and IL13, but not IL2. Recruits PRMT1 to the IL4 promoter; this leads to enhancement of histone H4 'Arg-3'-methylation and facilitates subsequent histone acetylation at the IL4 locus, thus promotes robust cytokine expression. Down-regulates formation of poly-SUMO chains by UBE2I/UBC9. The polypeptide is NFATC2-interacting protein (Nfatc2ip) (Mus musculus (Mouse)).